A 139-amino-acid chain; its full sequence is NADPH-dependent 7-cyano-7-deazaguanine reductase (139 aa).

The Thioimide intermediate role is filled by cysteine 34. Aspartate 41 (proton donor) is an active-site residue. Substrate contacts are provided by residues 56-58 (IEL) and 75-76 (HE).

Belongs to the GTP cyclohydrolase I family. QueF type 1 subfamily.

It is found in the cytoplasm. It catalyses the reaction 7-aminomethyl-7-carbaguanine + 2 NADP(+) = 7-cyano-7-deazaguanine + 2 NADPH + 3 H(+). The protein operates within tRNA modification; tRNA-queuosine biosynthesis. Functionally, catalyzes the NADPH-dependent reduction of 7-cyano-7-deazaguanine (preQ0) to 7-aminomethyl-7-deazaguanine (preQ1). This Nitrosomonas eutropha (strain DSM 101675 / C91 / Nm57) protein is NADPH-dependent 7-cyano-7-deazaguanine reductase.